Reading from the N-terminus, the 240-residue chain is Orotidine 5'-phosphate decarboxylase (240 aa).

Residues D16, K37, D64 to T73, T128, R190, Q199, G219, and R220 each bind substrate. Catalysis depends on K66, which acts as the Proton donor.

The protein belongs to the OMP decarboxylase family. Type 1 subfamily. In terms of assembly, homodimer.

The catalysed reaction is orotidine 5'-phosphate + H(+) = UMP + CO2. It functions in the pathway pyrimidine metabolism; UMP biosynthesis via de novo pathway; UMP from orotate: step 2/2. Catalyzes the decarboxylation of orotidine 5'-monophosphate (OMP) to uridine 5'-monophosphate (UMP). In Prochlorococcus marinus (strain SARG / CCMP1375 / SS120), this protein is Orotidine 5'-phosphate decarboxylase.